Reading from the N-terminus, the 206-residue chain is Ribosomal RNA small subunit methyltransferase G (206 aa).

S-adenosyl-L-methionine is bound by residues Gly-73, Leu-78, 124-125 (VE), and Arg-139.

Belongs to the methyltransferase superfamily. RNA methyltransferase RsmG family.

It is found in the cytoplasm. The catalysed reaction is guanosine(527) in 16S rRNA + S-adenosyl-L-methionine = N(7)-methylguanosine(527) in 16S rRNA + S-adenosyl-L-homocysteine. In terms of biological role, specifically methylates the N7 position of guanine in position 527 of 16S rRNA. This is Ribosomal RNA small subunit methyltransferase G from Serratia proteamaculans (strain 568).